Reading from the N-terminus, the 482-residue chain is Aspartyl/glutamyl-tRNA(Asn/Gln) amidotransferase subunit B (482 aa).

It belongs to the GatB/GatE family. GatB subfamily. Heterotrimer of A, B and C subunits.

It catalyses the reaction L-glutamyl-tRNA(Gln) + L-glutamine + ATP + H2O = L-glutaminyl-tRNA(Gln) + L-glutamate + ADP + phosphate + H(+). It carries out the reaction L-aspartyl-tRNA(Asn) + L-glutamine + ATP + H2O = L-asparaginyl-tRNA(Asn) + L-glutamate + ADP + phosphate + 2 H(+). Allows the formation of correctly charged Asn-tRNA(Asn) or Gln-tRNA(Gln) through the transamidation of misacylated Asp-tRNA(Asn) or Glu-tRNA(Gln) in organisms which lack either or both of asparaginyl-tRNA or glutaminyl-tRNA synthetases. The reaction takes place in the presence of glutamine and ATP through an activated phospho-Asp-tRNA(Asn) or phospho-Glu-tRNA(Gln). The protein is Aspartyl/glutamyl-tRNA(Asn/Gln) amidotransferase subunit B of Thermotoga petrophila (strain ATCC BAA-488 / DSM 13995 / JCM 10881 / RKU-1).